The sequence spans 424 residues: Histidine--tRNA ligase (424 aa).

This sequence belongs to the class-II aminoacyl-tRNA synthetase family. Homodimer.

The protein resides in the cytoplasm. The enzyme catalyses tRNA(His) + L-histidine + ATP = L-histidyl-tRNA(His) + AMP + diphosphate + H(+). The protein is Histidine--tRNA ligase of Sodalis glossinidius (strain morsitans).